A 214-amino-acid polypeptide reads, in one-letter code: Probable GTP-binding protein EngB (214 aa).

The region spanning 31–214 (GPPEIAFAGR…LRAAILQTIA (184 aa)) is the EngB-type G domain. Residues 39-46 (GRSNVGKS), 66-70 (GRTQE), 93-96 (DMPG), 160-163 (TKSD), and 194-196 (TSS) contribute to the GTP site. Positions 46 and 68 each coordinate Mg(2+).

The protein belongs to the TRAFAC class TrmE-Era-EngA-EngB-Septin-like GTPase superfamily. EngB GTPase family. Mg(2+) is required as a cofactor.

Its function is as follows. Necessary for normal cell division and for the maintenance of normal septation. The sequence is that of Probable GTP-binding protein EngB from Bartonella tribocorum (strain CIP 105476 / IBS 506).